The following is a 500-amino-acid chain: Aspartyl/glutamyl-tRNA(Asn/Gln) amidotransferase subunit B (500 aa).

The protein belongs to the GatB/GatE family. GatB subfamily. Heterotrimer of A, B and C subunits.

It catalyses the reaction L-glutamyl-tRNA(Gln) + L-glutamine + ATP + H2O = L-glutaminyl-tRNA(Gln) + L-glutamate + ADP + phosphate + H(+). The enzyme catalyses L-aspartyl-tRNA(Asn) + L-glutamine + ATP + H2O = L-asparaginyl-tRNA(Asn) + L-glutamate + ADP + phosphate + 2 H(+). In terms of biological role, allows the formation of correctly charged Asn-tRNA(Asn) or Gln-tRNA(Gln) through the transamidation of misacylated Asp-tRNA(Asn) or Glu-tRNA(Gln) in organisms which lack either or both of asparaginyl-tRNA or glutaminyl-tRNA synthetases. The reaction takes place in the presence of glutamine and ATP through an activated phospho-Asp-tRNA(Asn) or phospho-Glu-tRNA(Gln). The polypeptide is Aspartyl/glutamyl-tRNA(Asn/Gln) amidotransferase subunit B (Rhizobium meliloti (strain 1021) (Ensifer meliloti)).